The sequence spans 1474 residues: Adhesion G protein-coupled receptor L1 (1474 aa).

An N-terminal signal peptide occupies residues 1–24; that stretch reads MARLAAVLWNLCVTAVLVTSATQG. At 25–858 the chain is on the extracellular side; sequence LSRAGLPFGL…EIYQGRINEL (834 aa). The region spanning 40 to 129 is the SUEL-type lectin domain; the sequence is ACEGYPIELR…KYLEVQYDCV (90 aa). 5 disulfides stabilise this stretch: Cys41-Cys71, Cys50-Cys128, Cys83-Cys115, Cys96-Cys102, and Cys140-Cys322. Alpha-L-rhamnose is bound at residue Glu42. N-linked (GlcNAc...) asparagine glycosylation is present at Asn98. 117 to 120 contacts alpha-L-rhamnose; that stretch reads GTYK. The 260-residue stretch at 139–398 folds into the Olfactomedin-like domain; that stretch reads VCPGTLQKVL…VVRYSLEFGP (260 aa). The interval 400–434 is disordered; the sequence is DPSAGPATSPPLSTTTTARPTPLTSTASPAATTPL. Residues 405–434 show a composition bias toward low complexity; sequence PATSPPLSTTTTARPTPLTSTASPAATTPL. Intrachain disulfides connect Cys480-Cys515 and Cys503-Cys532. N-linked (GlcNAc...) asparagine glycans are attached at residues Asn531, Asn640, Asn742, Asn801, Asn806, and Asn827. In terms of domain architecture, GAIN-B spans 669 to 851; it reads PARFLAAKEN…AVLMAHREIY (183 aa). Cystine bridges form between Cys802-Cys833 and Cys821-Cys835. The GPS stretch occupies residues 802 to 851; sequence CSFWNYSERSMLGYWSTQGCRLVESNKTHTTCACSHLTNFAVLMAHREIY. Residues 859–879 traverse the membrane as a helical segment; it reads LLSVITWVGIVISLVCLAICI. The Cytoplasmic segment spans residues 880-893; that stretch reads STFCFLRGLQTDRN. Residues 894-914 traverse the membrane as a helical segment; the sequence is TIHKNLCINLFLAELLFLVGI. Topologically, residues 915–920 are extracellular; that stretch reads DKTQYE. Residues 921–941 form a helical membrane-spanning segment; the sequence is IACPIFAGLLHYFFLAAFSWL. At 942-964 the chain is on the cytoplasmic side; the sequence is CLEGVHLYLLLVEVFESEYSRTK. Residues 965-985 traverse the membrane as a helical segment; sequence YYYLGGYCFPALVVGIAAAID. Residues 986-1002 lie on the Extracellular side of the membrane; that stretch reads YRSYGTEKACWLRVDNY. A helical transmembrane segment spans residues 1003–1023; it reads FIWSFIGPVSFVIVVNLVFLM. The Cytoplasmic segment spans residues 1024–1050; sequence VTLHKMIRSSSVLKPDSSRLDNIKSWA. The chain crosses the membrane as a helical span at residues 1051 to 1071; sequence LGAIALLFLLGLTWAFGLLFI. At 1072-1075 the chain is on the extracellular side; that stretch reads NKES. The helical transmembrane segment at 1076–1096 threads the bilayer; sequence VVMAYLFTTFNAFQGVFIFVF. Residues 1097–1474 are Cytoplasmic-facing; it reads HCALQKKVHK…DGQMQLVTSL (378 aa). The residue at position 1194 (Arg1194) is an Omega-N-methylarginine. Phosphoserine is present on Ser1220. Disordered regions lie at residues 1248–1273, 1294–1328, 1360–1429, and 1451–1474; these read FNNS…RGRN, RGSS…PGGA, ESES…SRPP, and YLAA…VTSL. Pro residues-rich tracts occupy residues 1302 to 1314 and 1408 to 1420; these read GPPP…PPVP and ALPP…PGPP. The residue at position 1473 (Ser1473) is a Phosphoserine.

Belongs to the G-protein coupled receptor 2 family. Adhesion G-protein coupled receptor (ADGR) subfamily. As to quaternary structure, forms a heterodimer, consisting of a large extracellular region (p120) non-covalently linked to a seven-transmembrane moiety (p85). Interacts with syntaxin and with proteins of the SHANK family via the PDZ domain. Interacts (via extracellular domain) with FLRT1, FLRT2 and FLRT3 (via extracellular domain). In terms of processing, autoproteolytically cleaved into 2 subunits, an extracellular subunit and a seven-transmembrane subunit. This proteolytic processing takes place early in the biosynthetic pathway, either in the endoplasmic reticulum or in the early compartment of the Golgi apparatus.

The protein localises to the cell membrane. The protein resides in the cell projection. It is found in the axon. It localises to the growth cone. Its subcellular location is the synapse. The protein localises to the presynaptic cell membrane. The protein resides in the synaptosome. In terms of biological role, calcium-independent receptor of high affinity for alpha-latrotoxin, an excitatory neurotoxin present in black widow spider venom which triggers massive exocytosis from neurons and neuroendocrine cells. Receptor for TENM2 that mediates heterophilic synaptic cell-cell contact and postsynaptic specialization. Receptor probably implicated in the regulation of exocytosis. This chain is Adhesion G protein-coupled receptor L1, found in Homo sapiens (Human).